A 686-amino-acid chain; its full sequence is WD repeat-containing protein 93 (686 aa).

A compositionally biased stretch (polar residues) spans 1–10; the sequence is MSFPRGSQTQ. The interval 1-40 is disordered; sequence MSFPRGSQTQKIKHPIGTRKGPLEVPPPTEKDWPKDDEQD. The segment covering 29–40 has biased composition (basic and acidic residues); sequence TEKDWPKDDEQD. The stretch at 410-449 is one WD repeat; it reads PCAAPIAVSQLSCSSSYLVLACEDGVLTLWDLAKGFPLGV.

The protein is WD repeat-containing protein 93 (WDR93) of Homo sapiens (Human).